Consider the following 689-residue polypeptide: Protein-glutamine gamma-glutamyltransferase 2 (689 aa).

Residues C278, H336, and D359 contribute to the active site. Residues N399, D401, E437, E447, and E452 each coordinate Ca(2+). A disordered region spans residues S427 to R453. Residues V431–H441 are compositionally biased toward basic and acidic residues. R476 to A483 is a binding site for GTP. E539 serves as a coordination point for Ca(2+). A GTP-binding site is contributed by R580–Y583.

The protein belongs to the transglutaminase superfamily. Transglutaminase family. In terms of assembly, monomer. The cofactor is Ca(2+). In terms of tissue distribution, predominates in mature erythrocytes. Also found in kidney and cardiac muscle.

It localises to the cytoplasm. It is found in the cytosol. Its subcellular location is the nucleus. The protein localises to the chromosome. The protein resides in the secreted. It localises to the extracellular space. It is found in the extracellular matrix. Its subcellular location is the cell membrane. The protein localises to the mitochondrion. The catalysed reaction is L-glutaminyl-[protein] + L-lysyl-[protein] = [protein]-L-lysyl-N(6)-5-L-glutamyl-[protein] + NH4(+). It catalyses the reaction L-glutaminyl-[protein] + serotonin = 5-serotonyl-L-glutamyl-[protein] + NH4(+). It carries out the reaction L-glutaminyl-[protein] + dopamine = 5-dopaminyl-L-glutamyl-[protein] + NH4(+). The enzyme catalyses L-glutaminyl-[protein] + histamine = 5-histaminyl-L-glutamyl-[protein] + NH4(+). The catalysed reaction is L-glutaminyl-[protein] + (R)-noradrenaline = 5-(R)-noradrenalinyl-L-glutamyl-[protein] + NH4(+). It catalyses the reaction L-glutaminyl-[protein] + H2O = L-glutamyl-[protein] + NH4(+). Acyltransferase activity is regulated by the binding of GTP and Ca(2+): inactivated by GTP, which stabilizes its closed structure, thereby obstructing the accessibility of substrates to the active sites. In contrast, Ca(2+) acts as a cofactor by inducing conformational change to the active open form. In absence of Ca(2+), Mg(2+) may bind Ca(2+)-binding sites, promoting GTP-binding and subsequent inhibition of the acyltransferase activity. Functionally, calcium-dependent acyltransferase that catalyzes the formation of covalent bonds between peptide-bound glutamine and various primary amines, such as gamma-amino group of peptide-bound lysine, or mono- and polyamines, thereby producing cross-linked or aminated proteins, respectively. Involved in many biological processes, such as bone development, angiogenesis, wound healing, cellular differentiation, chromatin modification and apoptosis. Acts as a protein-glutamine gamma-glutamyltransferase by mediating the cross-linking of proteins: under physiological conditions, the protein cross-linking activity is inhibited by GTP; inhibition is relieved by Ca(2+) in response to various stresses. When secreted, catalyzes cross-linking of proteins of the extracellular matrix, resulting in the formation of scaffolds. Plays a key role during apoptosis, both by (1) promoting the cross-linking of cytoskeletal proteins resulting in condensation of the cytoplasm, and by (2) mediating cross-linking proteins of the extracellular matrix, resulting in the irreversible formation of scaffolds that stabilize the integrity of the dying cells before their clearance by phagocytosis, thereby preventing the leakage of harmful intracellular components. In addition to protein cross-linking, can use different monoamine substrates to catalyze a vast array of protein post-translational modifications: mediates aminylation of serotonin, dopamine, noradrenaline or histamine into glutamine residues of target proteins to generate protein serotonylation, dopaminylation, noradrenalinylation or histaminylation, respectively. Mediates protein serotonylation of small GTPases during activation and aggregation of platelets, leading to constitutive activation of these GTPases. Plays a key role in chromatin organization by mediating serotonylation and dopaminylation of histone H3. Catalyzes serotonylation of 'Gln-5' of histone H3 (H3Q5ser) during serotonergic neuron differentiation, thereby facilitating transcription. Acts as a mediator of neurotransmission-independent role of nuclear dopamine in ventral tegmental area (VTA) neurons: catalyzes dopaminylation of 'Gln-5' of histone H3 (H3Q5dop), thereby regulating relapse-related transcriptional plasticity in the reward system. Also acts as a protein deamidase by mediating the side chain deamidation of specific glutamine residues of proteins to glutamate. May also act as an isopeptidase cleaving the previously formed cross-links. Also able to participate in signaling pathways independently of its acyltransferase activity: acts as a signal transducer in alpha-1 adrenergic receptor-mediated stimulation of phospholipase C-delta (PLCD) activity and is required for coupling alpha-1 adrenergic agonists to the stimulation of phosphoinositide lipid metabolism. The sequence is that of Protein-glutamine gamma-glutamyltransferase 2 from Gallus gallus (Chicken).